The primary structure comprises 398 residues: MATTDIRLSIAHQTRFAVRLASAISSPSHAKGSSGNAAFSPLSLHVALSLVAAGAAATRDQLAATLGAAEKGDAEGLHALAEQVVQVVLADASGAGGPRSFANVFVDSSLKLKPSFKDLVVGKYKGETQSVDFQTKAPEVAGQVNSWVEKITTGLIKEILPAGSVDSTTRLVLGNALYFKGSWTEKFDASKTKDEKFHLLDGSSVQTPFMSSTKKQYISSYDSLKVLKLPYQQGGDKRQFSMYILLPEAQDGLWNLANKLSTEPEFMEKHMPMQKVPVGQFKLPKFKISFGFEASDMLKGLGLQLPFSSEADLSEMVDSPAARSLYVSSVFHKSFVEVNEEGTEAAARTARVVTLRSLPVEPVKVDFVADHPFLFLIREDLTGVVLFVGHVFNPLVSA.

Positions 342-366 (GTEAAARTARVVTLRSLPVEPVKVD) are RCL.

This sequence belongs to the serpin family. As to expression, expressed in roots, coleoptiles, shoots, leaves, embryo and endosperm.

Its function is as follows. Inhibits chymotrypsin, cathepsin G and trypsin in vitro. In Hordeum vulgare (Barley), this protein is Serpin-ZX (PAZX).